We begin with the raw amino-acid sequence, 357 residues long: 3-isopropylmalate dehydrogenase (357 aa).

76–89 (GPQWDTIDPSLRPE) provides a ligand contact to NAD(+). Positions 96, 106, 134, and 224 each coordinate substrate. 3 residues coordinate Mg(2+): Asp-224, Asp-248, and Asp-252. Residue 282–294 (GSAPDIAGKGIAN) coordinates NAD(+).

Belongs to the isocitrate and isopropylmalate dehydrogenases family. LeuB type 1 subfamily. In terms of assembly, homodimer. The cofactor is Mg(2+). Mn(2+) serves as cofactor.

It localises to the cytoplasm. The enzyme catalyses (2R,3S)-3-isopropylmalate + NAD(+) = 4-methyl-2-oxopentanoate + CO2 + NADH. It functions in the pathway amino-acid biosynthesis; L-leucine biosynthesis; L-leucine from 3-methyl-2-oxobutanoate: step 3/4. Functionally, catalyzes the oxidation of 3-carboxy-2-hydroxy-4-methylpentanoate (3-isopropylmalate) to 3-carboxy-4-methyl-2-oxopentanoate. The product decarboxylates to 4-methyl-2 oxopentanoate. In Xanthomonas euvesicatoria pv. vesicatoria (strain 85-10) (Xanthomonas campestris pv. vesicatoria), this protein is 3-isopropylmalate dehydrogenase.